Consider the following 388-residue polypeptide: Succinate--CoA ligase [ADP-forming] subunit beta (388 aa).

Positions 9 to 244 constitute an ATP-grasp domain; that stretch reads KSLFAEYGLP…PSQDDAREAH (236 aa). Residues Lys46, 53 to 55, Glu99, Thr102, and Glu107 contribute to the ATP site; that span reads GRG. Mg(2+) contacts are provided by Asn199 and Asp213. Residues Asn264 and 321–323 contribute to the substrate site; that span reads GIV.

This sequence belongs to the succinate/malate CoA ligase beta subunit family. Heterotetramer of two alpha and two beta subunits. The cofactor is Mg(2+).

The enzyme catalyses succinate + ATP + CoA = succinyl-CoA + ADP + phosphate. It catalyses the reaction GTP + succinate + CoA = succinyl-CoA + GDP + phosphate. Its pathway is carbohydrate metabolism; tricarboxylic acid cycle; succinate from succinyl-CoA (ligase route): step 1/1. Functionally, succinyl-CoA synthetase functions in the citric acid cycle (TCA), coupling the hydrolysis of succinyl-CoA to the synthesis of either ATP or GTP and thus represents the only step of substrate-level phosphorylation in the TCA. The beta subunit provides nucleotide specificity of the enzyme and binds the substrate succinate, while the binding sites for coenzyme A and phosphate are found in the alpha subunit. The protein is Succinate--CoA ligase [ADP-forming] subunit beta of Shewanella denitrificans (strain OS217 / ATCC BAA-1090 / DSM 15013).